The following is an 80-amino-acid chain: Cytochrome c-553 (80 aa).

4 residues coordinate heme c: C13, C16, H17, and M58.

In terms of processing, binds 1 heme c group covalently per subunit.

Its subcellular location is the periplasm. Functionally, natural electron acceptor for a formate dehydrogenase. This Desulfomicrobium norvegicum (strain DSM 1741 / NCIMB 8310) (Desulfovibrio baculatus (strain Norway 4)) protein is Cytochrome c-553.